Reading from the N-terminus, the 1404-residue chain is DNA-directed RNA polymerase subunit beta' (1404 aa).

Residues C70, C72, C85, and C88 each contribute to the Zn(2+) site. D460, D462, and D464 together coordinate Mg(2+). The Zn(2+) site is built by C814, C889, C896, and C899. Positions 1377–1404 are disordered; the sequence is DSEMETLSGKPAAAEPVAAVADAGADEE. Residues 1387–1404 are compositionally biased toward low complexity; sequence PAAAEPVAAVADAGADEE.

This sequence belongs to the RNA polymerase beta' chain family. As to quaternary structure, the RNAP catalytic core consists of 2 alpha, 1 beta, 1 beta' and 1 omega subunit. When a sigma factor is associated with the core the holoenzyme is formed, which can initiate transcription. It depends on Mg(2+) as a cofactor. The cofactor is Zn(2+).

The enzyme catalyses RNA(n) + a ribonucleoside 5'-triphosphate = RNA(n+1) + diphosphate. In terms of biological role, DNA-dependent RNA polymerase catalyzes the transcription of DNA into RNA using the four ribonucleoside triphosphates as substrates. This chain is DNA-directed RNA polymerase subunit beta', found in Xanthomonas euvesicatoria pv. vesicatoria (strain 85-10) (Xanthomonas campestris pv. vesicatoria).